A 511-amino-acid chain; its full sequence is 2-isopropylmalate synthase (511 aa).

Positions isoleucine 6 to serine 269 constitute a Pyruvate carboxyltransferase domain. The Mn(2+) site is built by aspartate 15, histidine 203, histidine 205, and asparagine 239. Residues valine 394–alanine 511 are regulatory domain.

This sequence belongs to the alpha-IPM synthase/homocitrate synthase family. LeuA type 1 subfamily. In terms of assembly, homodimer. Mn(2+) is required as a cofactor.

The protein localises to the cytoplasm. It carries out the reaction 3-methyl-2-oxobutanoate + acetyl-CoA + H2O = (2S)-2-isopropylmalate + CoA + H(+). Its pathway is amino-acid biosynthesis; L-leucine biosynthesis; L-leucine from 3-methyl-2-oxobutanoate: step 1/4. Catalyzes the condensation of the acetyl group of acetyl-CoA with 3-methyl-2-oxobutanoate (2-ketoisovalerate) to form 3-carboxy-3-hydroxy-4-methylpentanoate (2-isopropylmalate). This chain is 2-isopropylmalate synthase, found in Campylobacter jejuni subsp. doylei (strain ATCC BAA-1458 / RM4099 / 269.97).